We begin with the raw amino-acid sequence, 293 residues long: Ribosomal protein L11 methyltransferase (293 aa).

Positions 145, 166, 188, and 230 each coordinate S-adenosyl-L-methionine.

Belongs to the methyltransferase superfamily. PrmA family.

The protein localises to the cytoplasm. It carries out the reaction L-lysyl-[protein] + 3 S-adenosyl-L-methionine = N(6),N(6),N(6)-trimethyl-L-lysyl-[protein] + 3 S-adenosyl-L-homocysteine + 3 H(+). In terms of biological role, methylates ribosomal protein L11. The sequence is that of Ribosomal protein L11 methyltransferase from Sodalis glossinidius (strain morsitans).